The following is a 433-amino-acid chain: Phosphomethylpyrimidine synthase (433 aa).

Residues Asn66, Met94, Tyr123, His162, 184-186, 225-228, and Glu264 contribute to the substrate site; these read SRG and DALR. His268 is a Zn(2+) binding site. A substrate-binding site is contributed by Tyr291. His332 serves as a coordination point for Zn(2+). 3 residues coordinate [4Fe-4S] cluster: Cys408, Cys411, and Cys415.

This sequence belongs to the ThiC family. The cofactor is [4Fe-4S] cluster.

It carries out the reaction 5-amino-1-(5-phospho-beta-D-ribosyl)imidazole + S-adenosyl-L-methionine = 4-amino-2-methyl-5-(phosphooxymethyl)pyrimidine + CO + 5'-deoxyadenosine + formate + L-methionine + 3 H(+). It functions in the pathway cofactor biosynthesis; thiamine diphosphate biosynthesis. Catalyzes the synthesis of the hydroxymethylpyrimidine phosphate (HMP-P) moiety of thiamine from aminoimidazole ribotide (AIR) in a radical S-adenosyl-L-methionine (SAM)-dependent reaction. This is Phosphomethylpyrimidine synthase from Saccharolobus islandicus (strain M.14.25 / Kamchatka #1) (Sulfolobus islandicus).